We begin with the raw amino-acid sequence, 118 residues long: Na(+)/H(+) antiporter subunit G1 (118 aa).

Transmembrane regions (helical) follow at residues 9 to 29, 41 to 61, and 70 to 90; these read IALILVIIGSLISALAAIGIL, AGKAATLGAMLLISGVFLFFI, and QLIVGILFILITGPLASHLII.

The protein belongs to the CPA3 antiporters (TC 2.A.63) subunit G family. In terms of assembly, may form a heterooligomeric complex that consists of seven subunits: mnhA1, mnhB1, mnhC1, mnhD1, mnhE1, mnhF1 and mnhG1.

The protein localises to the cell membrane. In terms of biological role, mnh complex is a Na(+)/H(+) antiporter involved in Na(+) excretion. The sequence is that of Na(+)/H(+) antiporter subunit G1 (mnhG1) from Staphylococcus saprophyticus subsp. saprophyticus (strain ATCC 15305 / DSM 20229 / NCIMB 8711 / NCTC 7292 / S-41).